We begin with the raw amino-acid sequence, 611 residues long: MEKEGVCDTINLSDQMYPDEPFCSEMKTETIASSQKFEGGEGSKVVFSREAPLIGKDSAGTNSGECCGCSAKKLNFKGDDDLVEKENIEQQKKLNRQERIELGRLFQGAVTSLDWELAERLIQLADPQTLNDLLCVGLDSVWFLSTKPEFQGITGLIKKIICHGAHDFTRATLRTSFLASCVSACQSRTMSLSDTVTVMAQRLHERLQECNGDEILKAEAGAKVQKFTEWALKCIGFHSRCQGAKDRVSQNSAAEIELQLSAFKMFLDLAGNHLSGRDFTEAFDAACFPLTLFSNSFDPGWASGMSATVIQGLLGMLVEGGADNVNQCFLEASRFGSTELVRVLLQIAQRNSLDVDVDLALGFASHYCKIGTMKCLVEEGNAIAFLGPLMRAAERGCMQVVQWFVKRGCRDMELCLALTAATSSCQVEVAAYLLPRVPPPVLTALSIEILKAAGERSGGSLQGVEFLLKSDFLGDSTATYSVADSIARSSEDESVPSDLKSFLQEHWSESAFEKGMRESHDDFMNFMRVLKKGESAISLRDLPAPLRVAIAYMPLYRECMKADGRLLSQRLRGQLVEAVRQLQGCAVAVVEVSQTRNLMAVLEHHLTAIFD.

ANK repeat units lie at residues 292-322, 323-353, 356-384, 385-414, 416-442, and 445-478; these read LFSNSFDPGWASGMSATVIQGLLGMLVEGGA, DNVNQCFLEASRFGSTELVRVLLQIAQRNSL, DVDLALGFASHYCKIGTMKCLVEEGNAIA, FLGPLMRAAERGCMQVVQWFVKRGCRDMEL, LALTAATSSCQVEVAAYLLPRVPPPVL, and LSIEILKAAGERSGGSLQGVEFLLKSDFLGDSTA.

Interacts with SKP1A/ASK1.

The polypeptide is Ankyrin repeat protein SKIP35 (SKIP35) (Arabidopsis thaliana (Mouse-ear cress)).